The following is a 137-amino-acid chain: ATP synthase epsilon chain (137 aa).

This sequence belongs to the ATPase epsilon chain family. F-type ATPases have 2 components, CF(1) - the catalytic core - and CF(0) - the membrane proton channel. CF(1) has five subunits: alpha(3), beta(3), gamma(1), delta(1), epsilon(1). CF(0) has three main subunits: a, b and c.

Its subcellular location is the cellular thylakoid membrane. Functionally, produces ATP from ADP in the presence of a proton gradient across the membrane. The sequence is that of ATP synthase epsilon chain (atpC) from Nostoc sp. (strain PCC 7120 / SAG 25.82 / UTEX 2576).